Consider the following 387-residue polypeptide: Anhydro-N-acetylmuramic acid kinase (387 aa).

17–24 (GTSMDGVD) is a binding site for ATP.

This sequence belongs to the anhydro-N-acetylmuramic acid kinase family.

It carries out the reaction 1,6-anhydro-N-acetyl-beta-muramate + ATP + H2O = N-acetyl-D-muramate 6-phosphate + ADP + H(+). Its pathway is amino-sugar metabolism; 1,6-anhydro-N-acetylmuramate degradation. The protein operates within cell wall biogenesis; peptidoglycan recycling. In terms of biological role, catalyzes the specific phosphorylation of 1,6-anhydro-N-acetylmuramic acid (anhMurNAc) with the simultaneous cleavage of the 1,6-anhydro ring, generating MurNAc-6-P. Is required for the utilization of anhMurNAc either imported from the medium or derived from its own cell wall murein, and thus plays a role in cell wall recycling. The polypeptide is Anhydro-N-acetylmuramic acid kinase (Burkholderia mallei (strain ATCC 23344)).